A 277-amino-acid chain; its full sequence is Radial spoke head protein 9 homolog (277 aa).

The protein belongs to the flagellar radial spoke RSP9 family. As to quaternary structure, component of axonemal radial spoke complexes.

It is found in the cytoplasm. The protein localises to the cytoskeleton. The protein resides in the cilium axoneme. It localises to the flagellum axoneme. Its subcellular location is the cell projection. It is found in the kinocilium. Functions as part of axonemal radial spoke complexes that play an important part in the motility of sperm and cilia. Required for motility of olfactory and neural cilia and for the structural integrity of ciliary axonemes in both 9+0 and 9+2 motile cilia. Essential for both the radial spoke head assembly and the central pair microtubule stability in ependymal motile cilia. The sequence is that of Radial spoke head protein 9 homolog (rsph9) from Danio rerio (Zebrafish).